The primary structure comprises 103 residues: Large ribosomal subunit protein bL21 (103 aa).

Belongs to the bacterial ribosomal protein bL21 family. In terms of assembly, part of the 50S ribosomal subunit. Contacts protein L20.

This protein binds to 23S rRNA in the presence of protein L20. The chain is Large ribosomal subunit protein bL21 from Polaromonas sp. (strain JS666 / ATCC BAA-500).